Here is a 530-residue protein sequence, read N- to C-terminus: uncharacterized protein (530 aa).

It belongs to the protein kinase superfamily. ADCK protein kinase family.

This is an uncharacterized protein from Clostridium pasteurianum.